We begin with the raw amino-acid sequence, 282 residues long: Pantothenate synthetase (282 aa).

Position 28–35 (28–35 (MGALHSGH)) interacts with ATP. His-35 serves as the catalytic Proton donor. Gln-59 provides a ligand contact to (R)-pantoate. Gln-59 is a binding site for beta-alanine. 146-149 (GEKD) contributes to the ATP binding site. Position 152 (Gln-152) interacts with (R)-pantoate. Residues Val-175 and 183–186 (LSSR) each bind ATP.

It belongs to the pantothenate synthetase family. As to quaternary structure, homodimer.

Its subcellular location is the cytoplasm. It carries out the reaction (R)-pantoate + beta-alanine + ATP = (R)-pantothenate + AMP + diphosphate + H(+). It participates in cofactor biosynthesis; (R)-pantothenate biosynthesis; (R)-pantothenate from (R)-pantoate and beta-alanine: step 1/1. In terms of biological role, catalyzes the condensation of pantoate with beta-alanine in an ATP-dependent reaction via a pantoyl-adenylate intermediate. This chain is Pantothenate synthetase, found in Salinispora arenicola (strain CNS-205).